The chain runs to 331 residues: 6-phosphogluconolactonase (331 aa).

At Lys-287 the chain carries N6-acetyllysine.

Belongs to the cycloisomerase 2 family.

It carries out the reaction 6-phospho-D-glucono-1,5-lactone + H2O = 6-phospho-D-gluconate + H(+). It functions in the pathway carbohydrate degradation; pentose phosphate pathway; D-ribulose 5-phosphate from D-glucose 6-phosphate (oxidative stage): step 2/3. Functionally, catalyzes the hydrolysis of 6-phosphogluconolactone to 6-phosphogluconate. The sequence is that of 6-phosphogluconolactonase from Shigella boydii serotype 18 (strain CDC 3083-94 / BS512).